We begin with the raw amino-acid sequence, 124 residues long: Small ribosomal subunit protein uS12 (124 aa).

The segment at 1–32 (MPTIQQLVRKGREDKVVKTKTPALKGSPQRRG) is disordered. D89 is subject to 3-methylthioaspartic acid. Positions 105–124 (QGVKNRKQARSRYGAKKEKS) are disordered. Basic residues predominate over residues 108–118 (KNRKQARSRYG).

It belongs to the universal ribosomal protein uS12 family. In terms of assembly, part of the 30S ribosomal subunit. Contacts proteins S8 and S17. May interact with IF1 in the 30S initiation complex.

With S4 and S5 plays an important role in translational accuracy. In terms of biological role, interacts with and stabilizes bases of the 16S rRNA that are involved in tRNA selection in the A site and with the mRNA backbone. Located at the interface of the 30S and 50S subunits, it traverses the body of the 30S subunit contacting proteins on the other side and probably holding the rRNA structure together. The combined cluster of proteins S8, S12 and S17 appears to hold together the shoulder and platform of the 30S subunit. The sequence is that of Small ribosomal subunit protein uS12 from Kineococcus radiotolerans (strain ATCC BAA-149 / DSM 14245 / SRS30216).